The following is a 145-amino-acid chain: NADH dehydrogenase [ubiquinone] 1 alpha subcomplex subunit 12 (145 aa).

Position 1 is an N-acetylmethionine (methionine 1).

The protein belongs to the complex I NDUFA12 subunit family. As to quaternary structure, complex I is composed of 45 different subunits.

It is found in the mitochondrion inner membrane. Functionally, accessory subunit of the mitochondrial membrane respiratory chain NADH dehydrogenase (Complex I), that is believed not to be involved in catalysis. Complex I functions in the transfer of electrons from NADH to the respiratory chain. The immediate electron acceptor for the enzyme is believed to be ubiquinone. In Mus musculus (Mouse), this protein is NADH dehydrogenase [ubiquinone] 1 alpha subcomplex subunit 12 (Ndufa12).